The following is a 261-amino-acid chain: Pantothenate synthetase (261 aa).

ATP is bound at residue 29-36; that stretch reads MGALHNGH. The active-site Proton donor is the His36. Residue Gln60 coordinates (R)-pantoate. Gln60 provides a ligand contact to beta-alanine. An ATP-binding site is contributed by 147 to 150; that stretch reads GEKD. Gln153 contacts (R)-pantoate. Residue 184–187 coordinates ATP; that stretch reads LSSR.

This sequence belongs to the pantothenate synthetase family. Homodimer.

It is found in the cytoplasm. The catalysed reaction is (R)-pantoate + beta-alanine + ATP = (R)-pantothenate + AMP + diphosphate + H(+). The protein operates within cofactor biosynthesis; (R)-pantothenate biosynthesis; (R)-pantothenate from (R)-pantoate and beta-alanine: step 1/1. Catalyzes the condensation of pantoate with beta-alanine in an ATP-dependent reaction via a pantoyl-adenylate intermediate. The polypeptide is Pantothenate synthetase (Francisella tularensis subsp. tularensis (strain FSC 198)).